Consider the following 89-residue polypeptide: Small ribosomal subunit protein uS15 (89 aa).

This sequence belongs to the universal ribosomal protein uS15 family. Part of the 30S ribosomal subunit. Forms a bridge to the 50S subunit in the 70S ribosome, contacting the 23S rRNA.

Its function is as follows. One of the primary rRNA binding proteins, it binds directly to 16S rRNA where it helps nucleate assembly of the platform of the 30S subunit by binding and bridging several RNA helices of the 16S rRNA. Functionally, forms an intersubunit bridge (bridge B4) with the 23S rRNA of the 50S subunit in the ribosome. The chain is Small ribosomal subunit protein uS15 from Corynebacterium diphtheriae (strain ATCC 700971 / NCTC 13129 / Biotype gravis).